Here is a 202-residue protein sequence, read N- to C-terminus: Large ribosomal subunit protein bL25 (202 aa).

The interval 182–202 is disordered; the sequence is QTAPEEEEGTAAETTEPELAE. The segment covering 185 to 202 has biased composition (acidic residues); that stretch reads PEEEEGTAAETTEPELAE.

Belongs to the bacterial ribosomal protein bL25 family. CTC subfamily. Part of the 50S ribosomal subunit; part of the 5S rRNA/L5/L18/L25 subcomplex. Contacts the 5S rRNA. Binds to the 5S rRNA independently of L5 and L18.

Functionally, this is one of the proteins that binds to the 5S RNA in the ribosome where it forms part of the central protuberance. The chain is Large ribosomal subunit protein bL25 from Enterococcus faecalis (strain ATCC 700802 / V583).